The primary structure comprises 424 residues: MKFASKKNNQKNSSKNDERYRELDNLVQEGNGSRLGGGSCLGKCAHVFKLIFKEIKDNIFIYILSIIYLSVCVMNKIFAKRTLNKIGNYSFVTSETHNFICMIMFFIVYSLFGNKKGNSKERHRSFNLQFFAISMLDACSVILAFIGLTRTTGNIQSFVLQLSIPINMFFCFLILRYRYHLYNYLGAVIIVVTIALVEMKLSFETQEENSIIFNLVLISALIPVCFSNMTREIVFKKYKIDILRLNAMVSFFQLFTSCLILPVYTLPFLKQLHLPYNEIWTNIKNGFACLFLGRNTVVENCGLGMAKLCDDCDGAWKTFALFSFFNICDNLITSYIIDKFSTMTYTIVSCIQGPAIAIAYYFKFLAGDVVREPRLLDFVTLFGYLFGSIIYRVGNIILERKKMRNEENEDSEGELTNVDSIITQ.

Residues 1–58 lie on the Cytoplasmic side of the membrane; it reads MKFASKKNNQKNSSKNDERYRELDNLVQEGNGSRLGGGSCLGKCAHVFKLIFKEIKDN. The helical transmembrane segment at 59–79 threads the bilayer; that stretch reads IFIYILSIIYLSVCVMNKIFA. Topologically, residues 80-90 are vacuolar; sequence KRTLNKIGNYS. Asparagine 88 carries N-linked (GlcNAc...) asparagine glycosylation. A helical membrane pass occupies residues 91–111; the sequence is FVTSETHNFICMIMFFIVYSL. Topologically, residues 112 to 127 are cytoplasmic; that stretch reads FGNKKGNSKERHRSFN. Residues 128 to 148 traverse the membrane as a helical segment; that stretch reads LQFFAISMLDACSVILAFIGL. The Vacuolar segment spans residues 149-154; that stretch reads TRTTGN. The helical transmembrane segment at 155–175 threads the bilayer; it reads IQSFVLQLSIPINMFFCFLIL. Residues 176 to 178 lie on the Cytoplasmic side of the membrane; that stretch reads RYR. Residues 179–199 traverse the membrane as a helical segment; the sequence is YHLYNYLGAVIIVVTIALVEM. At 200-209 the chain is on the vacuolar side; sequence KLSFETQEEN. Residues 210-230 traverse the membrane as a helical segment; that stretch reads SIIFNLVLISALIPVCFSNMT. At 231 to 248 the chain is on the cytoplasmic side; it reads REIVFKKYKIDILRLNAM. A helical transmembrane segment spans residues 249–269; sequence VSFFQLFTSCLILPVYTLPFL. The Vacuolar segment spans residues 270–317; that stretch reads KQLHLPYNEIWTNIKNGFACLFLGRNTVVENCGLGMAKLCDDCDGAWK. Cystine bridges form between cysteine 289–cysteine 312 and cysteine 301–cysteine 309. The helical transmembrane segment at 318 to 338 threads the bilayer; sequence TFALFSFFNICDNLITSYIID. The Cytoplasmic portion of the chain corresponds to 339–346; it reads KFSTMTYT. A helical transmembrane segment spans residues 347–367; that stretch reads IVSCIQGPAIAIAYYFKFLAG. Residues 368-377 lie on the Vacuolar side of the membrane; that stretch reads DVVREPRLLD. Residues 378 to 398 form a helical membrane-spanning segment; sequence FVTLFGYLFGSIIYRVGNIIL. Over 399-424 the chain is Cytoplasmic; the sequence is ERKKMRNEENEDSEGELTNVDSIITQ.

This sequence belongs to the CRT-like transporter family. In terms of assembly, monomer.

The protein resides in the vacuole membrane. It catalyses the reaction L-arginine(in) = L-arginine(out). The catalysed reaction is L-lysine(in) = L-lysine(out). It carries out the reaction L-histidine(out) = L-histidine(in). The enzyme catalyses histamine(out) = histamine(in). It catalyses the reaction spermidine(in) = spermidine(out). The catalysed reaction is Fe(3+)(in) = Fe(3+)(out). It carries out the reaction Fe(2+)(in) = Fe(2+)(out). Its activity is regulated as follows. Transporter activity is trans-stimulated by host-derived peptides containing 4-11 amino acids. Trans-stimulation by hemoglobin-derived peptide VDPVNF is pH-dependent and sodium-independent. Saquinavir trans-stimulates transport of hemoglobin-derived peptide VDPVNF. Protons are non-competitive inhibitors of chloroquine transport. Functionally, nutrient transporter. Substrate transport is pH-dependent. Can transport arginine, lysine, histidine, peptides, histamine and spermidine. May modulate activity of endogenous transporters. Involved in maintaining the osmotic homeostasis of the digestive vacuole. Required for the asexual intraerythrocytic proliferation of parasites. Can transport Fe(2+) and Fe(3+). The sequence is that of Chloroquine resistance transporter from Plasmodium falciparum.